The chain runs to 291 residues: AA14 family lytic polysaccharide monooxygenase (291 aa).

The first 17 residues, 1 to 17 (MLTTAILFTSLAGSAYA), serve as a signal peptide directing secretion. The N-linked (GlcNAc...) asparagine glycan is linked to N141. Cystine bridges form between C192–C197, C199–C220, and C240–C247.

Belongs to the polysaccharide monooxygenase AA14 family. Cu(2+) serves as cofactor.

The protein resides in the secreted. Its function is as follows. Lytic polysaccharide monooxygenase (LPMO) that is active against heteroxylan, xyloglucan and cellulose in beta-cellulose and released native oligosaccharides and corresponding C1- and/or C4-oxidized products. May act mainly on heteroxylan with numerous arabinosyl substituents between cellulose fibers rather than on recalcitrant xylan tightly associated with cellulose. Catalysis by LPMOs requires the reduction of the active-site copper from Cu(II) to Cu(I) by a reducing agent and H(2)O(2) or O(2) as a cosubstrate. Shows a branched chain preference, and has synergistic effects with the Penicillium parvum debranching enzyme ABF62C in an enzyme- and ascorbic acid-dependent manner. Also has synergistic effects with the Penicillium parvum GH10 endoxylanase XYN1, and the degree of synergy was greater with step-by-step addition than with simultaneous addition. The sequence is that of AA14 family lytic polysaccharide monooxygenase from Sordaria brevicollis.